Reading from the N-terminus, the 359-residue chain is 3-dehydroquinate synthase (359 aa).

NAD(+)-binding positions include 106 to 110 (GVVGD), 130 to 131 (TT), Lys-143, Lys-152, and 170 to 173 (TLQT). The Zn(2+) site is built by Glu-185, His-248, and His-265.

The protein belongs to the sugar phosphate cyclases superfamily. Dehydroquinate synthase family. The cofactor is Co(2+). Requires Zn(2+) as cofactor. It depends on NAD(+) as a cofactor.

It localises to the cytoplasm. The enzyme catalyses 7-phospho-2-dehydro-3-deoxy-D-arabino-heptonate = 3-dehydroquinate + phosphate. It participates in metabolic intermediate biosynthesis; chorismate biosynthesis; chorismate from D-erythrose 4-phosphate and phosphoenolpyruvate: step 2/7. Functionally, catalyzes the conversion of 3-deoxy-D-arabino-heptulosonate 7-phosphate (DAHP) to dehydroquinate (DHQ). This is 3-dehydroquinate synthase from Desulforamulus reducens (strain ATCC BAA-1160 / DSM 100696 / MI-1) (Desulfotomaculum reducens).